A 78-amino-acid chain; its full sequence is Structural DNA-binding protein p10 (78 aa).

A compositionally biased stretch (low complexity) spans 1-24 (MPTKAGTKSTANKKTTKGSSKSGS). The segment at 1–41 (MPTKAGTKSTANKKTTKGSSKSGSPRGHTGKTHAPPSMHSG) is disordered.

This sequence belongs to the asfivirus P10 family.

The protein localises to the virion. May play a role in genome packaging through direct interaction with viral DNA. Binds to ssDNA and dsDNA with the same apparent affinity in vitro. The polypeptide is Structural DNA-binding protein p10 (African swine fever virus (isolate Tick/South Africa/Pretoriuskop Pr4/1996) (ASFV)).